A 479-amino-acid polypeptide reads, in one-letter code: Solute carrier family 7 member 13 (479 aa).

The Cytoplasmic portion of the chain corresponds to 1 to 14 (MAMDIEKKIYLKRQ). Residues 15-35 (LGYFWGTNFLIINIIGAGIFV) form a helical membrane-spanning segment. Residues 36–47 (SPKGVLQYSSMN) lie on the Extracellular side of the membrane. The helical transmembrane segment at 48–68 (VGVSLCVWVFCAVLSMTSTLC) threads the bilayer. At 69-89 (AAEIGITFPYTVAHYYFLKRC) the chain is on the cytoplasmic side. The chain crosses the membrane as a helical span at residues 90–110 (FGPFVAFLRLWTSLFTGPGVL). Residues 111-129 (ASQALLLAEYGIQPFYPSC) are Extracellular-facing. The chain crosses the membrane as a helical span at residues 130 to 150 (SAPAVPKKCLALAMLWIVGIL). The Cytoplasmic portion of the chain corresponds to 151–165 (NSRGVKELSWLQTVS). Residues 166 to 186 (MVLKMGILSFISLSGLFLLVT) form a helical membrane-spanning segment. At 187–208 (GRKENVRRLQNAFDAEFPEVSR) the chain is on the extracellular side. Residues 209–229 (LIEAIFQGYFAFSGGGSFTYV) form a helical membrane-spanning segment. Residues 230–242 (AGELKEPSKTIPR) are Cytoplasmic-facing. Residues 243–263 (CIFTALPLVTVVYLLANLSYL) form a helical membrane-spanning segment. The Extracellular segment spans residues 264-289 (TVLSPQELLSSDAVALTWTDRVIPQL). A helical transmembrane segment spans residues 290–310 (TWSVPFAISASLFSNLVTSVF). Over 311 to 338 (ETSRTSYIASRNGQLPLLCSTLNVHSSP) the chain is Cytoplasmic. The chain crosses the membrane as a helical span at residues 339–359 (FIAVLLDVSMGSIAIVLTNLI). Residue glutamate 360 is a topological domain, extracellular. Residues 361–381 (LINYLFFVFSIWTVLSVIGIL) traverse the membrane as a helical segment. The Cytoplasmic segment spans residues 382 to 396 (KLRYQEPNLHRPYKV). A helical transmembrane segment spans residues 397 to 417 (FSPFLFITAAISLSMVLIPLI). The Extracellular segment spans residues 418–423 (KSPKMQ). The chain crosses the membrane as a helical span at residues 424-444 (YIYVFLFFLGGLLFYVPLIHF). At 445-479 (KLKLIWFQKLTCYLQLLFNICIPDVSDEHVAEEES) the chain is on the cytoplasmic side.

Belongs to the amino acid-polyamine-organocation (APC) superfamily. Disulfide-linked heterodimer composed of the catalytic light subunit SLC7A13 and the heavy subunit SLC3A1.

The protein localises to the apical cell membrane. The enzyme catalyses L-cystine(out) + L-aspartate(in) = L-cystine(in) + L-aspartate(out). It catalyses the reaction L-cystine(out) = L-cystine(in). The catalysed reaction is L-aspartate(in) + L-glutamate(out) = L-aspartate(out) + L-glutamate(in). It carries out the reaction L-aspartate(in) + L-glutamine(out) = L-aspartate(out) + L-glutamine(in). The enzyme catalyses L-aspartate(in) + L-methionine(out) = L-aspartate(out) + L-methionine(in). It catalyses the reaction L-leucine(out) + L-aspartate(in) = L-leucine(in) + L-aspartate(out). The catalysed reaction is L-valine(out) + L-aspartate(in) = L-valine(in) + L-aspartate(out). It carries out the reaction L-aspartate(in) + L-phenylalanine(out) = L-aspartate(out) + L-phenylalanine(in). The enzyme catalyses L-tyrosine(out) + L-aspartate(in) = L-tyrosine(in) + L-aspartate(out). It catalyses the reaction L-tryptophan(out) + L-aspartate(in) = L-tryptophan(in) + L-aspartate(out). Its function is as follows. Associates with SLC3A1/rBAT to form a functional heterodimeric complex that transports anionic and neutral amino acids across the apical plasma membrane of renal epithelium. Preferentially mediates exchange transport, but can also operate via facilitated diffusion. May act as a major transporter for L-cystine in late proximal tubules, ensuring its reabsorption from the luminal fluid in exchange for cytosolic L-glutamate or L-aspartate. The polypeptide is Solute carrier family 7 member 13 (Slc7a13) (Rattus norvegicus (Rat)).